Reading from the N-terminus, the 263-residue chain is Shikimate dehydrogenase (NADP(+)) (263 aa).

Residues 16 to 18 (SKS) and Thr-65 each bind shikimate. Lys-69 (proton acceptor) is an active-site residue. 2 residues coordinate shikimate: Asn-90 and Asp-105. NADP(+)-binding positions include 125–129 (GSGGS) and Leu-208. A shikimate-binding site is contributed by Tyr-210. NADP(+) is bound at residue Gly-230.

Belongs to the shikimate dehydrogenase family. In terms of assembly, homodimer.

It catalyses the reaction shikimate + NADP(+) = 3-dehydroshikimate + NADPH + H(+). Its pathway is metabolic intermediate biosynthesis; chorismate biosynthesis; chorismate from D-erythrose 4-phosphate and phosphoenolpyruvate: step 4/7. Involved in the biosynthesis of the chorismate, which leads to the biosynthesis of aromatic amino acids. Catalyzes the reversible NADPH linked reduction of 3-dehydroshikimate (DHSA) to yield shikimate (SA). The polypeptide is Shikimate dehydrogenase (NADP(+)) (Helicobacter pylori (strain P12)).